Here is a 963-residue protein sequence, read N- to C-terminus: Iron-responsive element-binding protein 2 (963 aa).

Residues Cys-512, Cys-578, and Cys-581 each contribute to the [4Fe-4S] cluster site.

The protein belongs to the aconitase/IPM isomerase family. In terms of assembly, interacts with RBCK1 only in iron-rich conditions. Interacts (when associated with the 4Fe-4S) with FBXL5. Interacts with CIAO1 and CIAO2A. Requires [4Fe-4S] cluster as cofactor. In terms of processing, ubiquitinated and degraded by the proteasome in presence of high level of iron and oxygen. Ubiquitinated by a SCF complex containing FBXL5. Upon iron and oxygen depletion FBXL5 is degraded, preventing ubiquitination and allowing its RNA-binding activity. In terms of tissue distribution, ubiquitously expressed in rat tissues, the highest amounts present in skeletal muscle and heart.

The protein localises to the cytoplasm. RNA-binding protein that binds to iron-responsive elements (IRES), which are stem-loop structures found in the 5'-UTR of ferritin, and delta aminolevulinic acid synthase mRNAs, and in the 3'-UTR of transferrin receptor mRNA. Binding to the IRE element in ferritin results in the repression of its mRNA translation. Binding of the protein to the transferrin receptor mRNA inhibits the degradation of this otherwise rapidly degraded mRNA. The sequence is that of Iron-responsive element-binding protein 2 (Ireb2) from Rattus norvegicus (Rat).